Consider the following 123-residue polypeptide: Transmembrane protein 80 (123 aa).

Transmembrane regions (helical) follow at residues Leu2–Val22, Leu35–Leu55, Leu68–Trp88, and Val102–Ile122.

Its subcellular location is the membrane. It localises to the cell projection. It is found in the cilium. The polypeptide is Transmembrane protein 80 (Tmem80) (Mus musculus (Mouse)).